The following is a 628-amino-acid chain: Rac GTPase-activating protein 1 (628 aa).

Methionine 1 bears the N-acetylmethionine mark. Residues 33-110 (QVVKDFEDFR…IQLIRDILMC (78 aa)) are a coiled coil. Residues 107–286 (ILMCDTSGSI…GTPQNTGGMR (180 aa)) form an interaction with SLC26A8 region. Serine 150 carries the phosphoserine; by PLK1 modification. Position 155 is a phosphoserine (serine 155). Serine 158 carries the phosphoserine; by PLK1 modification. A Phosphothreonine modification is found at threonine 162. Phosphoserine; by PLK1 is present on residues serine 165 and serine 171. The segment at 179 to 201 (KKREKRRSNSRQFIDGPPGPVKK) is disordered. Residues serine 204, serine 207, and serine 215 each carry the phosphoserine modification. The segment at 242-284 (SWTRSRGKSGPLQPVNSDSALNSRPLEPRTDTDNLGTPQNTGG) is disordered. A Glycyl lysine isopeptide (Lys-Gly) (interchain with G-Cter in SUMO2) cross-link involves residue lysine 249. At serine 258 the chain carries Phosphoserine. Residues 274-283 (DNLGTPQNTG) are compositionally biased toward polar residues. The Phorbol-ester/DAG-type zinc-finger motif lies at 287–336 (LHDFVSKTVIKPESCVPCGKRIKFGKLSLKCRDCRLVSHPECRDRCPLPC). Threonine 343 is modified (phosphothreonine). The Rho-GAP domain maps to 350 to 540 (GMLADFVSQA…RLLSLPLEYW (191 aa)). Serine 388 carries the phosphoserine; by AURKB modification. Lysine 405 participates in a covalent cross-link: Glycyl lysine isopeptide (Lys-Gly) (interchain with G-Cter in SUMO2). Residue serine 411 is modified to Phosphoserine; by AURKB. Phosphothreonine is present on residues threonine 564, threonine 577, threonine 585, and threonine 602.

In terms of assembly, heterotetramer of two molecules each of RACGAP1 and KIF23. Found in the centralspindlin complex. Associates with alpha-, beta- and gamma-tubulin and microtubules. Interacts via its Rho-GAP domain with RND2. Associates with AURKB during M phase. Interacts via its Rho-GAP domain and basic region with PRC1. The interaction with PRC1 inhibits its GAP activity towards CDC42 in vitro, which may be required for maintaining normal spindle morphology. Interacts with SLC26A8 via its N-terminus. Interacts with ECT2; the interaction is direct, occurs at anaphase and during cytokinesis in a microtubule-dependent manner, is enhanced by phosphorylation by PLK1 and phosphorylation at Ser-165 plays a major role in mediating binding. Interacts with RAB11FIP3; the interaction occurs at late telophase. Interacts with KIF23; the interaction is direct. Post-translationally, phosphorylated at multiple sites in the midbody during cytokinesis. Phosphorylation by AURKB on Ser-388 at the midbody is, at least in part, responsible for exerting its latent GAP activity towards RhoA. Phosphorylation on multiple serine residues by PLK1 enhances its association with ECT2 and is critical for cleavage furrow formation. Phosphorylation on Ser-165 plays a major role in mediating interaction with ECT2. Phosphorylation on Ser-158 does not appear to contribute to binding to ECT2. As to expression, highly expressed in testis, thymus and spleen and weakly expressed in brain, heart, skeletal muscle and kidney. In testis, expression is restricted to germ cells with the highest levels of expression found in spermatocytes. Not detected in adult liver. Also expressed in fetal liver and in several hematopoietic cell lines.

Its subcellular location is the nucleus. The protein localises to the cytoplasm. It is found in the cytoskeleton. The protein resides in the spindle. It localises to the cytoplasmic vesicle. Its subcellular location is the secretory vesicle. The protein localises to the acrosome. It is found in the cleavage furrow. The protein resides in the midbody. It localises to the midbody ring. Its subcellular location is the cell membrane. Component of the centralspindlin complex that serves as a microtubule-dependent and Rho-mediated signaling required for the myosin contractile ring formation during the cell cycle cytokinesis. Required for proper attachment of the midbody to the cell membrane during cytokinesis. Sequentially binds to ECT2 and RAB11FIP3 which regulates cleavage furrow ingression and abscission during cytokinesis. Plays key roles in controlling cell growth and differentiation of hematopoietic cells through mechanisms other than regulating Rac GTPase activity. Has a critical role in erythropoiesis. Also involved in the regulation of growth-related processes in adipocytes and myoblasts. May be involved in regulating spermatogenesis and in the RACGAP1 pathway in neuronal proliferation. Shows strong GAP (GTPase activation) activity towards CDC42 and RAC1 and less towards RHOA. Essential for the early stages of embryogenesis. May play a role in regulating cortical activity through RHOA during cytokinesis. May participate in the regulation of sulfate transport in male germ cells. This is Rac GTPase-activating protein 1 from Mus musculus (Mouse).